Here is a 159-residue protein sequence, read N- to C-terminus: Odorant-binding protein (159 aa).

The protein belongs to the calycin superfamily. Lipocalin family. As to quaternary structure, homodimer.

It localises to the secreted. In terms of biological role, this protein binds a wide variety of chemical odorants. In Bos taurus (Bovine), this protein is Odorant-binding protein.